A 279-amino-acid polypeptide reads, in one-letter code: Shikimate dehydrogenase (NADP(+)) (279 aa).

Shikimate-binding positions include 17–19 (SQS) and T64. K68 acts as the Proton acceptor in catalysis. N89 and D105 together coordinate shikimate. NADP(+)-binding positions include 130–134 (GAGGA) and L218. A shikimate-binding site is contributed by Y220. G242 contacts NADP(+).

This sequence belongs to the shikimate dehydrogenase family. Homodimer.

It catalyses the reaction shikimate + NADP(+) = 3-dehydroshikimate + NADPH + H(+). It participates in metabolic intermediate biosynthesis; chorismate biosynthesis; chorismate from D-erythrose 4-phosphate and phosphoenolpyruvate: step 4/7. Involved in the biosynthesis of the chorismate, which leads to the biosynthesis of aromatic amino acids. Catalyzes the reversible NADPH linked reduction of 3-dehydroshikimate (DHSA) to yield shikimate (SA). This chain is Shikimate dehydrogenase (NADP(+)), found in Methylococcus capsulatus (strain ATCC 33009 / NCIMB 11132 / Bath).